The chain runs to 92 residues: Small ribosomal subunit protein uS19 (92 aa).

It belongs to the universal ribosomal protein uS19 family.

Its function is as follows. Protein S19 forms a complex with S13 that binds strongly to the 16S ribosomal RNA. This is Small ribosomal subunit protein uS19 from Vibrio atlanticus (strain LGP32) (Vibrio splendidus (strain Mel32)).